The chain runs to 72 residues: Alpha-conotoxin SII (72 aa).

The N-terminal stretch at 1 to 21 is a signal peptide; the sequence is MGMRMMFTVFLLVVLATTVVS. Positions 22-50 are excised as a propeptide; it reads FPSDRASDGRDDEAKDERSDMHESDRNGR. Residues 23 to 51 are disordered; the sequence is PSDRASDGRDDEAKDERSDMHESDRNGRG. Basic and acidic residues predominate over residues 26–49; sequence RASDGRDDEAKDERSDMHESDRNG. Intrachain disulfides connect Cys52/Cys68, Cys53/Cys58, and Cys54/Cys64. Residues 70–72 constitute a propeptide that is removed on maturation; the sequence is RTL.

It belongs to the conotoxin A superfamily. The disulfide bond Cys-52-Cys-68 (Cys I-VI), which corresponds to an extra disulfide bond when compared to the cysteine framework I (CC-C-C), does contribute to conotoxin SII stability and imparts a unique binding mode at the nAChR. Expressed by the venom duct.

It is found in the secreted. Its function is as follows. Alpha-conotoxins act on postsynaptic membranes, they bind to the nicotinic acetylcholine receptors (nAChR) and thus inhibit them. This toxin potently inhibits the rodent muscle nAChR (IC(50)=120 nM (adult subtype, alpha-1-beta-1-delta-epsilon/CHRNA1-CHRNB1-CHRND-CHRNE) and IC(50)=370 nM (fetal subtype, alpha-1-beta-1-gamma-delta/CHRNA1-CHRNB1-CHRNG-CHRND)) and weakly inhibits neuronal nAChRs. In contrast to alpha-conotoxins bearing 2 disulfide bonds (framework I), this conotoxin acts via a unique binding mode with the helix and the N- and C-termini buried in the binding pocket of muscle nAChRs. In Conus striatus (Striated cone), this protein is Alpha-conotoxin SII.